A 369-amino-acid chain; its full sequence is Chorismate synthase (369 aa).

The NADP(+) site is built by Arg-48 and Arg-54. FMN contacts are provided by residues 125-127 (RSS), 238-239 (NA), Gly-278, 293-297 (KPTSS), and Arg-319.

This sequence belongs to the chorismate synthase family. Homotetramer. The cofactor is FMNH2.

It carries out the reaction 5-O-(1-carboxyvinyl)-3-phosphoshikimate = chorismate + phosphate. Its pathway is metabolic intermediate biosynthesis; chorismate biosynthesis; chorismate from D-erythrose 4-phosphate and phosphoenolpyruvate: step 7/7. In terms of biological role, catalyzes the anti-1,4-elimination of the C-3 phosphate and the C-6 proR hydrogen from 5-enolpyruvylshikimate-3-phosphate (EPSP) to yield chorismate, which is the branch point compound that serves as the starting substrate for the three terminal pathways of aromatic amino acid biosynthesis. This reaction introduces a second double bond into the aromatic ring system. This chain is Chorismate synthase, found in Burkholderia thailandensis (strain ATCC 700388 / DSM 13276 / CCUG 48851 / CIP 106301 / E264).